The sequence spans 61 residues: Small ribosomal subunit protein uS14 (61 aa).

Positions 24, 27, 40, and 43 each coordinate Zn(2+).

Belongs to the universal ribosomal protein uS14 family. Zinc-binding uS14 subfamily. Part of the 30S ribosomal subunit. Contacts proteins S3 and S10. Zn(2+) serves as cofactor.

In terms of biological role, binds 16S rRNA, required for the assembly of 30S particles and may also be responsible for determining the conformation of the 16S rRNA at the A site. This Clostridium botulinum (strain 657 / Type Ba4) protein is Small ribosomal subunit protein uS14.